The following is a 241-amino-acid chain: 1-(5-phosphoribosyl)-5-[(5-phosphoribosylamino)methylideneamino] imidazole-4-carboxamide isomerase (241 aa).

The Proton acceptor role is filled by aspartate 7. Residue aspartate 129 is the Proton donor of the active site.

This sequence belongs to the HisA/HisF family.

The protein localises to the cytoplasm. It carries out the reaction 1-(5-phospho-beta-D-ribosyl)-5-[(5-phospho-beta-D-ribosylamino)methylideneamino]imidazole-4-carboxamide = 5-[(5-phospho-1-deoxy-D-ribulos-1-ylimino)methylamino]-1-(5-phospho-beta-D-ribosyl)imidazole-4-carboxamide. It participates in amino-acid biosynthesis; L-histidine biosynthesis; L-histidine from 5-phospho-alpha-D-ribose 1-diphosphate: step 4/9. This Buchnera aphidicola subsp. Baizongia pistaciae (strain Bp) protein is 1-(5-phosphoribosyl)-5-[(5-phosphoribosylamino)methylideneamino] imidazole-4-carboxamide isomerase.